The primary structure comprises 497 residues: Glutamate--tRNA ligase (497 aa).

The 'HIGH' region signature appears at 13 to 23; that stretch reads PSPTGDPHVGT. The 'KMSKS' region signature appears at 253-257; it reads KISKR. Lys256 serves as a coordination point for ATP.

This sequence belongs to the class-I aminoacyl-tRNA synthetase family. Glutamate--tRNA ligase type 1 subfamily. In terms of assembly, monomer.

It is found in the cytoplasm. The enzyme catalyses tRNA(Glu) + L-glutamate + ATP = L-glutamyl-tRNA(Glu) + AMP + diphosphate. Its function is as follows. Catalyzes the attachment of glutamate to tRNA(Glu) in a two-step reaction: glutamate is first activated by ATP to form Glu-AMP and then transferred to the acceptor end of tRNA(Glu). This is Glutamate--tRNA ligase from Cutibacterium acnes (strain DSM 16379 / KPA171202) (Propionibacterium acnes).